The primary structure comprises 80 residues: HssA/B-like protein 2 (80 aa).

The tract at residues 1–29 (MSLLSALTSISKPMNTSSKSSVSSKNVSG) is disordered. Positions 9-29 (SISKPMNTSSKSSVSSKNVSG) are enriched in low complexity.

It belongs to the hssA/B family.

The chain is HssA/B-like protein 2 (hssl2) from Dictyostelium discoideum (Social amoeba).